The sequence spans 312 residues: Glyoxylate/hydroxypyruvate reductase A (312 aa).

The active site involves R227. The Proton donor role is filled by H275.

The protein belongs to the D-isomer specific 2-hydroxyacid dehydrogenase family. GhrA subfamily.

It localises to the cytoplasm. It carries out the reaction glycolate + NADP(+) = glyoxylate + NADPH + H(+). The catalysed reaction is (R)-glycerate + NAD(+) = 3-hydroxypyruvate + NADH + H(+). It catalyses the reaction (R)-glycerate + NADP(+) = 3-hydroxypyruvate + NADPH + H(+). Catalyzes the NADPH-dependent reduction of glyoxylate and hydroxypyruvate into glycolate and glycerate, respectively. The polypeptide is Glyoxylate/hydroxypyruvate reductase A (Klebsiella pneumoniae (strain 342)).